The sequence spans 510 residues: NAD(P)H-quinone oxidoreductase subunit 2, chloroplastic (510 aa).

Helical transmembrane passes span 24–44 (LLLF…GLIL), 59–79 (WFYF…LFRW), 99–119 (IFQF…VEYI), 124–144 (MAIT…MFLC), 149–169 (LITI…LSGY), 183–203 (YLLM…WLYG), 229–249 (ISIA…PAPF), 295–315 (WHLL…LIAI), 323–343 (MLAY…IVGD), 347–367 (GYAS…GTFA), 395–415 (ALSS…AGFF), and 418–438 (LHLF…IGLL).

The protein belongs to the complex I subunit 2 family. In terms of assembly, NDH is composed of at least 16 different subunits, 5 of which are encoded in the nucleus.

The protein resides in the plastid. It localises to the chloroplast thylakoid membrane. It carries out the reaction a plastoquinone + NADH + (n+1) H(+)(in) = a plastoquinol + NAD(+) + n H(+)(out). The catalysed reaction is a plastoquinone + NADPH + (n+1) H(+)(in) = a plastoquinol + NADP(+) + n H(+)(out). Its function is as follows. NDH shuttles electrons from NAD(P)H:plastoquinone, via FMN and iron-sulfur (Fe-S) centers, to quinones in the photosynthetic chain and possibly in a chloroplast respiratory chain. The immediate electron acceptor for the enzyme in this species is believed to be plastoquinone. Couples the redox reaction to proton translocation, and thus conserves the redox energy in a proton gradient. The polypeptide is NAD(P)H-quinone oxidoreductase subunit 2, chloroplastic (Yucca glauca (Soapweed yucca)).